We begin with the raw amino-acid sequence, 546 residues long: MFS-type transporter GME11371 (546 aa).

Transmembrane regions (helical) follow at residues L39–I59, I77–G96, M107–T127, I137–V157, G167–L187, W195–F215, and F240–G260. N-linked (GlcNAc...) asparagine glycosylation occurs at N267. Transmembrane regions (helical) follow at residues D270 to W290, V307 to Y327, L349 to T369, G370 to I390, W402 to L422, V433 to S453, and I509 to P529.

This sequence belongs to the major facilitator superfamily.

The protein resides in the cell membrane. It functions in the pathway secondary metabolite biosynthesis. Its function is as follows. MFS-type transporter; part of the gene cluster that mediates the biosynthesis of dibenzodioxocinones such as pestalotiollide B, a novel class of inhibitors against cholesterol ester transfer protein (CEPT). essential for dibenzodioxocinones biosynthesis and may be involved in the secretion of the cluster products. This chain is MFS-type transporter GME11371, found in Pestalotiopsis microspora.